The primary structure comprises 123 residues: WAP four-disulfide core domain protein 5 (123 aa).

The signal sequence occupies residues 1 to 24 (MRIQSLLLLGALLAVGSQLPAVFG). WAP domains lie at 27 to 73 (KGEK…CVPR) and 74 to 121 (VSVK…RDPA). Intrachain disulfides connect cysteine 34-cysteine 62, cysteine 41-cysteine 66, cysteine 49-cysteine 61, cysteine 55-cysteine 70, cysteine 81-cysteine 109, cysteine 88-cysteine 113, cysteine 96-cysteine 108, and cysteine 102-cysteine 117.

It is found in the secreted. Functionally, putative acid-stable proteinase inhibitor. The polypeptide is WAP four-disulfide core domain protein 5 (WFDC5) (Chlorocebus aethiops (Green monkey)).